The following is a 153-amino-acid chain: ATP synthase subunit b' (153 aa).

The chain crosses the membrane as a helical span at residues 23 to 40; sequence LMAIQVVALTYILNSLFF.

It belongs to the ATPase B chain family. In terms of assembly, F-type ATPases have 2 components, F(1) - the catalytic core - and F(0) - the membrane proton channel. F(1) has five subunits: alpha(3), beta(3), gamma(1), delta(1), epsilon(1). F(0) has four main subunits: a(1), b(1), b'(1) and c(10-14). The alpha and beta chains form an alternating ring which encloses part of the gamma chain. F(1) is attached to F(0) by a central stalk formed by the gamma and epsilon chains, while a peripheral stalk is formed by the delta, b and b' chains.

It localises to the cellular thylakoid membrane. In terms of biological role, f(1)F(0) ATP synthase produces ATP from ADP in the presence of a proton or sodium gradient. F-type ATPases consist of two structural domains, F(1) containing the extramembraneous catalytic core and F(0) containing the membrane proton channel, linked together by a central stalk and a peripheral stalk. During catalysis, ATP synthesis in the catalytic domain of F(1) is coupled via a rotary mechanism of the central stalk subunits to proton translocation. Functionally, component of the F(0) channel, it forms part of the peripheral stalk, linking F(1) to F(0). The b'-subunit is a diverged and duplicated form of b found in plants and photosynthetic bacteria. This is ATP synthase subunit b' from Prochlorococcus marinus (strain MIT 9515).